Reading from the N-terminus, the 512-residue chain is Solute carrier family 2, facilitated glucose transporter member 7 (512 aa).

Topologically, residues 1-21 are cytoplasmic; sequence MENKEAGTPPPIPSREGRLQP. A helical transmembrane segment spans residues 22-42; the sequence is TLLLATLSAAFGSAFQYGYNL. At 43–78 the chain is on the extracellular side; the sequence is SVVNTPHKVFKSFYNETYFERHATFMDGKLMLLLWS. Asparagine 57 carries N-linked (GlcNAc...) asparagine glycosylation. Residues 79 to 99 form a helical membrane-spanning segment; sequence CTVSMFPLGGLLGSLLVGLLV. Topologically, residues 100–107 are cytoplasmic; sequence DSCGRKGT. Residues 108–128 form a helical membrane-spanning segment; that stretch reads LLINNIFAIIPAILMGVSKVA. The Extracellular segment spans residues 129-138; the sequence is KAFELIVFSR. The helical transmembrane segment at 139–159 threads the bilayer; the sequence is VVLGVCAGISYSALPMYLGEL. Residues 160-172 are Cytoplasmic-facing; the sequence is APKNLRGMVGTMT. Residues 173 to 193 form a helical membrane-spanning segment; the sequence is EVFVIVGVFLAQIFSLQAILG. Topologically, residues 194–198 are extracellular; that stretch reads NPAGW. Residues 199–219 traverse the membrane as a helical segment; that stretch reads PVLLALTGVPALLQLLTLPFF. The Cytoplasmic segment spans residues 220 to 281; it reads PESPRYSLIQ…LHLCALRSLR (62 aa). A helical transmembrane segment spans residues 282–302; sequence WQLLSIIVLMAGQQLSGINAI. Residues 294–295 and asparagine 300 each bind D-glucose; that span reads QQ. The Extracellular portion of the chain corresponds to 303-321; the sequence is NYYADTIYTSAGVEAAHSQ. The chain crosses the membrane as a helical span at residues 322–342; that stretch reads YVTVGSGVVNIVMTITSAVLV. Asparagine 331 contacts D-glucose. Residues 343–350 are Cytoplasmic-facing; it reads ERLGRRHL. The helical transmembrane segment at 351–371 threads the bilayer; sequence LLAGYGICGSACLVLTVVLLF. Residues 372–379 lie on the Extracellular side of the membrane; that stretch reads QNRVPELS. The helical transmembrane segment at 380 to 400 threads the bilayer; it reads YLGIICVFAYIAGHSIGPSPV. Over 401–415 the chain is Cytoplasmic; it reads PSVVRTEIFLQSSRR. Residues 416-436 traverse the membrane as a helical segment; it reads AAFMVDGAVHWLTNFIIGFLF. Topologically, residues 437–445 are extracellular; it reads PSIQEAIGA. A helical transmembrane segment spans residues 446-466; that stretch reads YSFIIFAGICLLTAIYIYVVI. Over 467–512 the chain is Cytoplasmic; sequence PETKGKTFVEINRIFAKRNRVKLPEEKEETIDAGPPTASPAKETSF. Positions 491 to 512 are disordered; that stretch reads EEKEETIDAGPPTASPAKETSF.

Belongs to the major facilitator superfamily. Sugar transporter (TC 2.A.1.1) family. Glucose transporter subfamily. As to expression, expressed in small intestine and colon. Weakly expressed in testis and prostate.

The protein localises to the cell membrane. Its subcellular location is the apical cell membrane. The catalysed reaction is D-glucose(out) = D-glucose(in). It carries out the reaction D-fructose(out) = D-fructose(in). Its activity is regulated as follows. Glucose and fructose transport are inhibited by the flavonoid apigenin. In terms of biological role, probable sugar transporter. Even if its physiological substrate is subject to discussion, it is able to transport glucose and fructose. Does not transport galactose, 2-deoxy-d-glucose and xylose. In Homo sapiens (Human), this protein is Solute carrier family 2, facilitated glucose transporter member 7.